We begin with the raw amino-acid sequence, 871 residues long: Coatomer subunit gamma-2 (871 aa).

Residues 1–11 are compositionally biased toward basic and acidic residues; it reads MIKKFDKKDEE. Residues 1–20 form a disordered region; it reads MIKKFDKKDEESGSGSNPFR. HEAT repeat units follow at residues 64–101, 283–320, 321–355, 356–392, 395–430, and 467–504; these read TEATEAFFAMTRLFQSNDQTLRRMCYLTIKEMATISED, RELAPAVSVLQLFCSSPKPALRYAAVRTLNKVAMKHPS, AVTACNLDLENLITDSNRSIATLAITTLLKTGSES, SVDRLMKQISSFVSEISDEFKVVVVQAISALCQKYPR, SVMMTFLSNMLRDDGGFEYKRAIVDCIIHIVEENPE, and PVPSKYIRFIFNRVVLENEAVRAAAVSALAKFGAQNEN. Phosphothreonine is present on threonine 594.

This sequence belongs to the COPG family. In terms of assembly, oligomeric complex. Binds to CDC42. Interacts with JAGN1. Interacts with TMED10 (via cytoplasmic domain).

It is found in the cytoplasm. The protein localises to the cytosol. Its subcellular location is the golgi apparatus membrane. The protein resides in the cytoplasmic vesicle. It localises to the COPI-coated vesicle membrane. Functionally, the coatomer is a cytosolic protein complex that binds to dilysine motifs and reversibly associates with Golgi non-clathrin-coated vesicles, which further mediate biosynthetic protein transport from the ER, via the Golgi up to the trans Golgi network. Coatomer complex is required for budding from Golgi membranes, and is essential for the retrograde Golgi-to-ER transport of dilysine-tagged proteins. In mammals, the coatomer can only be recruited by membranes associated to ADP-ribosylation factors (ARFs), which are small GTP-binding proteins; the complex also influences the Golgi structural integrity, as well as the processing, activity, and endocytic recycling of LDL receptors. This chain is Coatomer subunit gamma-2 (COPG2), found in Bos taurus (Bovine).